We begin with the raw amino-acid sequence, 585 residues long: Probable G-protein coupled receptor Mth-like 10 (585 aa).

The N-terminal stretch at 1–32 (MPKKIHQPGGSLYCGVTLLGVLCLVVFRLIPG) is a signal peptide. Topologically, residues 33–250 (IPFGTYVMAE…DHSTVKIINS (218 aa)) are extracellular. 5 disulfides stabilise this stretch: C56–C110, C112–C117, C121–C216, C122–C135, and C177–C236. N-linked (GlcNAc...) asparagine glycosylation is found at N63 and N72. Residues N142, N152, N157, N198, and N223 are each glycosylated (N-linked (GlcNAc...) asparagine). The chain crosses the membrane as a helical span at residues 251-271 (YAMMFSIPFMMLTIAVYLLIP). The Cytoplasmic portion of the chain corresponds to 272–280 (ELRNQHGKS). Residues 281-301 (LVCYLIGLSVGYSSLCYVQLY) form a helical membrane-spanning segment. Residues 302–312 (QVDATGVTCKV) are Extracellular-facing. Residues 313–333 (FGYTAYFFFMGAYMWLSVISF) form a helical membrane-spanning segment. Residues 334 to 353 (DLWHNFRGTRGINRFQEKKR) are Cytoplasmic-facing. A helical membrane pass occupies residues 354–374 (FLFYSLYSWGIALVFLAFTYC). Residues 375–404 (AQQLTNLPANLKPGIGDGVYCWLDMSNWAA) are Extracellular-facing. The helical transmembrane segment at 405–425 (MIYFYGPILAIVVANTIMFIM) threads the bilayer. The Cytoplasmic segment spans residues 426-466 (TAIKIHGVQREMARIIASENSTKNLRTEKDKRFYRAWSNYR). A helical membrane pass occupies residues 467-487 (FGLFLRLFLIMGITWLTELIS). Over 488–498 (YFVGSDKGWSK) the chain is Extracellular. The chain crosses the membrane as a helical span at residues 499-519 (LFYISDLANAMQGFLIFMLFV). Over 520-585 (MKKKVKHLIT…VDPQKTTIFR (66 aa)) the chain is Cytoplasmic.

It belongs to the G-protein coupled receptor 2 family. Mth subfamily.

Its subcellular location is the cell membrane. The protein is Probable G-protein coupled receptor Mth-like 10 (mthl10) of Drosophila melanogaster (Fruit fly).